Consider the following 447-residue polypeptide: Alliin lyase (447 aa).

Residues 1-2 (QA) constitute a propeptide that is removed on maturation. The EGF-like; atypical domain occupies 15–61 (EAVANINCSGHGRAFLDGILSDGSPKCECNTCYTGADCSQKITGCSA). Residue Asn21 is glycosylated (N-linked (GlcNAc...) asparagine). Disulfide bonds link Cys22-Cys41, Cys43-Cys52, and Cys46-Cys59. A chloride-binding site is contributed by 94-102 (YFFNPVSNF). Residues Asn148 and Asn193 are each glycosylated (N-linked (GlcNAc...) asparagine). Lys253 carries the post-translational modification N6-(pyridoxal phosphate)lysine. N-linked (GlcNAc...) asparagine glycosylation occurs at Asn330. The cysteines at positions 370 and 378 are disulfide-linked.

It belongs to the alliinase family. As to quaternary structure, homodimer. Requires pyridoxal 5'-phosphate as cofactor.

The protein localises to the vacuole. The enzyme catalyses an S-alkyl-L-cysteine S-oxide = an S-alkyl sulfenate + 2-aminoprop-2-enoate. This chain is Alliin lyase, found in Allium cepa var. aggregatum (Shallot).